The sequence spans 1341 residues: MLNIIYVVSLILIKFIFYKECNNNNNYYLSNIELYNYKLRKRNRILNNNINDRKSFLSDLEQNYKPLFDIYELSANFEKRRKELEKKTKGEENEIEKKKENDLEKKKENEIEKKKENDLEKEYNDVINLLELSLSSEYKELNADVSNNDNSGHEENNKHKLNKKNSSNYKNDKSLDELIKGAILKLKQNPNIKNKNMLDYDKIFKIIKEKLINKNLASNKIKGGDNEKLKEEKKQSDISTNVEVKKDIINDQLNKGIPTKKENKDDMINKESNKEDITNEGKSNSLNNLNTLNNDGNIITKVYDHYTIVTNSNDILNDISIDASDISKNSIGGINIPFNENDNSSFTHQRYIVLSNNGEKKYKIVLMTKNPKFMDMDGIYDEEEKKESLIELNQKVNKEENTNLYDGTGTLYYGKKSKKEKENTQQKGGNNPNVDINILNNNNNNNNNNNSNNNSNSMNDEEINYNNNNNNKESPSMFRRFINFLSFSGNENETEDTLIYHNKNDNSYKNKKEGTGKNNDNNDPNNNNNKKILLNVDKLVDQYLLNLKNNHTSKQELILVLKGELDLHSKNMKNVINNAKKNLEKYFKEHFKEFDKISYDISTPINFLCIFIPTLFDMNNMDLLKQALLILHNDLHEYVENWSFSSTYHTYEADYIKEQDSVYDRSPKKKYIKASKKLYNNKYSFLNKFLNIEPLILFAKKLNSKRSNIEKEILNFLPKELRDYSTWNLSIIRVFNAWFLAGYGNKNVKVCVVDSGADINHVDLNGNLYIPEYNEKYEMTQDFYNFMVKNPTDASGHGTHVTGIIGGVANDLGVVGVAPNITLISLRFIDGKKYGGSFHAIKALNVCILNKAPIINASWGSSHFDVNLHLAVERLKYTLNGKGSVLIAASGNKSNDNDISPLYPATFTFPHVYSVASISRNFEISPFSNYGHKSVHILAPGHHIYSTIPNNSYKIFTGTSMAAPHVCGVSALVYSVCYNQGFIPQAEEVLDILTRTSIKIISTKKRTINDSLVNAEGAVLTTLLGGLWMQMDCYFVKFNLEKGKKKHIPVVFSAYKKGVYETDIVIAIIPIDGKSKIYGEIHIPIKIVTDVNIPNFQESPRRGKNYTIDSNEAQHDEVLSYICENALYNLYEYDSHYLLASVILFFLALLSIFVGMIYMKSRKHSDKKCSKNLIKSNYIPEMDDGMEETQQLQQERRQYFRELFGENLEKNYDQHFVQDFGQDFRQDFKLGSTPDLKQYSDIDLQNKIQQPERKTVKIIINNFEDRKKETKRRLLKGLNYDGENAKKHDFTNESISNSRKNFKFSNNTEMKKNTIKSEDVKIASDDNVNKAMNQLDDMFMK.

The first 18 residues, 1 to 18 (MLNIIYVVSLILIKFIFY), serve as a signal peptide directing secretion. Positions 19–686 (KECNNNNNYY…KLYNNKYSFL (668 aa)) are cleaved as a propeptide — inhibition peptide. 2 disordered regions span residues 85-107 (EKKT…EKKK) and 143-171 (ADVS…NYKN). N-linked (GlcNAc...) asparagine glycans are attached at residues Asn-165, Asn-343, Asn-449, Asn-453, and Asn-492. Positions 415–474 (KKSKKEKENTQQKGGNNPNVDINILNNNNNNNNNNNSNNNSNSMNDEEINYNNNNNNKES) are disordered. The segment covering 430-474 (NNPNVDINILNNNNNNNNNNNSNNNSNSMNDEEINYNNNNNNKES) has biased composition (low complexity). A disordered region spans residues 499 to 530 (IYHNKNDNSYKNKKEGTGKNNDNNDPNNNNNK). Residues 502-515 (NKNDNSYKNKKEGT) show a composition bias toward basic and acidic residues. Residues 517–530 (KNNDNNDPNNNNNK) show a composition bias toward low complexity. N-linked (GlcNAc...) asparagine glycosylation is found at Asn-550, Asn-641, and Asn-728. Residues 687-1136 (NKFLNIEPLI…LYNLYEYDSH (450 aa)) lie on the Extracellular side of the membrane. The region spanning 726-1019 (TWNLSIIRVF…DSLVNAEGAV (294 aa)) is the Peptidase S8 domain. Catalysis depends on charge relay system residues Asp-754 and His-797. Residues Asn-820, Asn-856, Asn-892, and Asn-950 are each glycosylated (N-linked (GlcNAc...) asparagine). Ser-960 serves as the catalytic Charge relay system. 2 N-linked (GlcNAc...) asparagine glycosylation sites follow: Asn-1009 and Asn-1105. The helical transmembrane segment at 1137-1157 (YLLASVILFFLALLSIFVGMI) threads the bilayer. The Cytoplasmic portion of the chain corresponds to 1158–1341 (YMKSRKHSDK…MNQLDDMFMK (184 aa)).

The protein belongs to the peptidase S8 family. Post-translationally, proteolytically cleaved at the N-terminus to generate a 74kDa intermediate which is further processed into a 72kDa form. The first maturation cleavage is autocatalytic, occurs in the ER and is necessary for the subsequent SUB2 trafficking to the microneme. The second cleavage may be mediated by PMX/plasmepsin X.

It localises to the cell membrane. The protein localises to the cytoplasmic vesicle. Its subcellular location is the secretory vesicle. The protein resides in the microneme membrane. It carries out the reaction Hydrolysis of proteins with broad specificity for peptide bonds, and a preference for a large uncharged residue in P1. Hydrolyzes peptide amides.. With respect to regulation, activation may be calcium-dependent. Inhibited by the non-covalent interaction with the cleaved propeptide. Serine protease which plays an essential role in the shedding of AMA1, MSP1 and MSP7 from the surface of the invading merozoite; this step is essential for productive invasion and the release of the adhesion between the erythrocyte and the merozoite. May cleave TRAMP/PTTRAMP, thereby shedding TRAMP from the merozoite surface during erythrocyte invasion. The sequence is that of Subtilisin-like protease 2 from Plasmodium falciparum (isolate 3D7).